The sequence spans 66 residues: MSRDELRIVLGAMIPNMEEGFEIKTRDGAILRVDPEWECCKEFKDGLKAEIIKQLKSKPAVVFGYS.

Involved in the depression of host DNA replication. This chain is Protein dhr (dhr), found in Escherichia phage 186 (Bacteriophage 186).